A 294-amino-acid polypeptide reads, in one-letter code: Shikimate dehydrogenase (NADP(+)) (294 aa).

Shikimate-binding positions include 25 to 27 and T72; that span reads SAS. K76 (proton acceptor) is an active-site residue. Residues N97 and D112 each coordinate shikimate. NADP(+) contacts are provided by residues 136–140 and T234; that span reads GAGGA. Y236 contacts shikimate. An NADP(+)-binding site is contributed by G257.

This sequence belongs to the shikimate dehydrogenase family. Homodimer.

It carries out the reaction shikimate + NADP(+) = 3-dehydroshikimate + NADPH + H(+). It functions in the pathway metabolic intermediate biosynthesis; chorismate biosynthesis; chorismate from D-erythrose 4-phosphate and phosphoenolpyruvate: step 4/7. In terms of biological role, involved in the biosynthesis of the chorismate, which leads to the biosynthesis of aromatic amino acids. Catalyzes the reversible NADPH linked reduction of 3-dehydroshikimate (DHSA) to yield shikimate (SA). The polypeptide is Shikimate dehydrogenase (NADP(+)) (Symbiobacterium thermophilum (strain DSM 24528 / JCM 14929 / IAM 14863 / T)).